The following is a 399-amino-acid chain: uncharacterized protein (399 aa).

Transmembrane regions (helical) follow at residues 6 to 26 (HLTF…LIIP), 27 to 47 (KGYN…FIPL), 60 to 80 (LIFS…INKD), 111 to 131 (ILYA…FQKF), 147 to 167 (MGNI…HFFI), 173 to 193 (STLF…LSGA), 195 to 215 (GGWI…KEFI), 220 to 240 (IITL…SPKF), 328 to 348 (GLVG…YFIK), and 362 to 382 (ILGI…SFLA).

Its subcellular location is the cell membrane. This is an uncharacterized protein from Haemophilus influenzae (strain ATCC 51907 / DSM 11121 / KW20 / Rd).